Consider the following 247-residue polypeptide: UPF0280 protein MMP1236 (247 aa).

It belongs to the UPF0280 family.

This chain is UPF0280 protein MMP1236, found in Methanococcus maripaludis (strain DSM 14266 / JCM 13030 / NBRC 101832 / S2 / LL).